Reading from the N-terminus, the 324-residue chain is NADH-ubiquinone oxidoreductase chain 1 (324 aa).

8 consecutive transmembrane segments (helical) span residues Met10–Val30, Phe76–Leu96, Leu107–Gly127, Val143–Leu163, Pro178–Ala198, Leu229–Phe249, Glu260–Ile280, and Phe300–Gly320.

It belongs to the complex I subunit 1 family.

Its subcellular location is the mitochondrion inner membrane. The enzyme catalyses a ubiquinone + NADH + 5 H(+)(in) = a ubiquinol + NAD(+) + 4 H(+)(out). In terms of biological role, core subunit of the mitochondrial membrane respiratory chain NADH dehydrogenase (Complex I) that is believed to belong to the minimal assembly required for catalysis. Complex I functions in the transfer of electrons from NADH to the respiratory chain. The immediate electron acceptor for the enzyme is believed to be ubiquinone. The protein is NADH-ubiquinone oxidoreductase chain 1 (MT-ND1) of Coturnix japonica (Japanese quail).